Reading from the N-terminus, the 295-residue chain is Nucleotide-binding protein YvcJ (295 aa).

An ATP-binding site is contributed by G16–T23. Residue D67–G70 participates in GTP binding.

It belongs to the RapZ-like family.

Its function is as follows. Displays ATPase and GTPase activities. Can also hydrolyze pNPP. May affect the expression of competence via the phosphorylation of a cellular component. This Bacillus subtilis (strain 168) protein is Nucleotide-binding protein YvcJ (yvcJ).